A 334-amino-acid polypeptide reads, in one-letter code: Phosphoribosylformylglycinamidine cyclo-ligase (334 aa).

The protein belongs to the AIR synthase family.

It localises to the cytoplasm. It carries out the reaction 2-formamido-N(1)-(5-O-phospho-beta-D-ribosyl)acetamidine + ATP = 5-amino-1-(5-phospho-beta-D-ribosyl)imidazole + ADP + phosphate + H(+). It participates in purine metabolism; IMP biosynthesis via de novo pathway; 5-amino-1-(5-phospho-D-ribosyl)imidazole from N(2)-formyl-N(1)-(5-phospho-D-ribosyl)glycinamide: step 2/2. The protein is Phosphoribosylformylglycinamidine cyclo-ligase of Pyrococcus furiosus (strain ATCC 43587 / DSM 3638 / JCM 8422 / Vc1).